The chain runs to 481 residues: Tetratricopeptide repeat protein 29 (481 aa).

Low complexity predominate over residues 1–18; sequence MASVGPVKTKTVTLKELT. Residues 1 to 53 form a disordered region; that stretch reads MASVGPVKTKTVTLKELTPPIPSPEKSACKGAKPDSNHMALVPVKPSQPGSGK. TPR repeat units follow at residues 191-224, 231-264, 271-310, 317-350, 357-390, and 397-430; these read CERCQLLADYFESERDCDEAAWHYDVALRIAMES, QEVRLSFGAFFERHKQLRKAIALFEEVYHLAMAL, VEANYRLIRTYLSLSAELKDTNPKEAISFLERALDMSQRV, ADSLHALGNIYESMGDFRRALEYQKRFFEVARAA, KRASLCVASMQERMNMTDEAVHSLQCALELSEKA, and YRATMQLGQAYDSSGDHEKALMSYRANFGAARKL.

As to quaternary structure, interacts with TAX-1.

It is found in the cytoplasm. It localises to the cytoskeleton. The protein localises to the flagellum axoneme. In terms of biological role, axonemal protein which is implicated in axonemal and/or peri-axonemal structure assembly and regulates flagellum assembly and beating. The sequence is that of Tetratricopeptide repeat protein 29 from Trypanosoma brucei brucei (strain 927/4 GUTat10.1).